A 115-amino-acid chain; its full sequence is Large ribosomal subunit protein uL22 (115 aa).

This sequence belongs to the universal ribosomal protein uL22 family. As to quaternary structure, part of the 50S ribosomal subunit.

Functionally, this protein binds specifically to 23S rRNA; its binding is stimulated by other ribosomal proteins, e.g. L4, L17, and L20. It is important during the early stages of 50S assembly. It makes multiple contacts with different domains of the 23S rRNA in the assembled 50S subunit and ribosome. The globular domain of the protein is located near the polypeptide exit tunnel on the outside of the subunit, while an extended beta-hairpin is found that lines the wall of the exit tunnel in the center of the 70S ribosome. This chain is Large ribosomal subunit protein uL22 (rplV), found in Wolbachia pipientis wMel.